The sequence spans 756 residues: Xylosyl- and glucuronyltransferase LARGE1 (756 aa).

Over 1 to 10 the chain is Cytoplasmic; it reads MLGICRGRRK. A helical; Signal-anchor for type II membrane protein transmembrane segment spans residues 11–31; sequence FLAASLSLLCIPAITWIYLFS. Topologically, residues 32–756 are lumenal; sequence GSFEDGKPVS…LKYLTAENNS (725 aa). Disordered regions lie at residues 43 to 69 and 81 to 109; these read SPLE…EVRM and RQLS…EGTG. Over residues 44–58 the composition is skewed to polar residues; sequence PLESQAHSPRYTASS. Residues 53–95 are a coiled coil; it reads RYTASSQRERESLEVRMREVEEENRALRRQLSLAQGRAPSHRR. A compositionally biased stretch (basic and acidic residues) spans 59-69; that stretch reads QRERESLEVRM. Residues Asn97, Asn122, and Asn148 are each glycosylated (N-linked (GlcNAc...) asparagine). A xylosyltransferase activity region spans residues 138 to 413; the sequence is IHVAIVCAGY…FLEYDGNLLR (276 aa). Residues Asp242 and Asp244 each coordinate Mn(2+). Asn272 carries N-linked (GlcNAc...) asparagine glycosylation. The tract at residues 414-756 is glucuronyltransferase activity; it reads RELFGCPSEA…LKYLTAENNS (343 aa). Positions 563 and 565 each coordinate Mn(2+).

The protein in the C-terminal section; belongs to the glycosyltransferase 49 family. It in the N-terminal section; belongs to the glycosyltransferase 8 family. Interacts with DAG1 (via the N-terminal domain of alpha-DAG1); the interaction increases binding of DAG1 to laminin. Interacts with B4GAT1. Mn(2+) serves as cofactor. Ubiquitous. Highest expression in heart, brain and skeletal muscle.

The protein resides in the golgi apparatus membrane. The catalysed reaction is 3-O-[beta-D-GlcA-(1-&gt;3)-beta-D-Xyl-(1-&gt;4)-Rib-ol-P-Rib-ol-P-3-beta-D-GalNAc-(1-&gt;3)-beta-D-GlcNAc-(1-&gt;4)-(O-6-P-alpha-D-Man)]-Thr-[protein] + UDP-alpha-D-xylose = 3-O-[alpha-D-Xyl-(1-&gt;3)-beta-D-GlcA-(1-&gt;4)-beta-D-Xyl-(1-&gt;4)-Rib-ol-P-Rib-ol-P-3-beta-D-GalNAc-(1-&gt;3)-beta-D-GlcNAc-(1-&gt;4)-(O-6-P-alpha-D-Man)]-Thr-[protein] + UDP + H(+). It catalyses the reaction 3-O-{(1-&gt;[3)-alpha-D-Xyl-(1-&gt;3)-beta-D-GlcA-(1-&gt;](n)-4)-beta-D-Xyl-(1-&gt;4)-Rib-ol-P-Rib-ol-P-3-beta-D-GalNAc-(1-&gt;3)-beta-D-GlcNAc-(1-&gt;4)-O-6-P-alpha-D-Man}-L-Thr-[protein] + UDP-alpha-D-glucuronate = 3-O-{beta-D-GlcA-(1-&gt;[3)-alpha-D-Xyl-(1-&gt;3)-beta-D-GlcA-(1-&gt;](n)-4)-beta-D-Xyl-(1-&gt;4)-Rib-ol-P-Rib-ol-P-3-beta-D-GalNAc-(1-&gt;3)-beta-D-GlcNAc-(1-&gt;4)-O-6-P-alpha-D-Man}-L-Thr-[protein] + UDP + H(+). It carries out the reaction 3-O-{beta-D-GlcA-(1-&gt;[3)-alpha-D-Xyl-(1-&gt;3)-beta-D-GlcA-(1-&gt;](n)-4)-beta-D-Xyl-(1-&gt;4)-Rib-ol-P-Rib-ol-P-3-beta-D-GalNAc-(1-&gt;3)-beta-D-GlcNAc-(1-&gt;4)-O-6-P-alpha-D-Man}-L-Thr-[protein] + UDP-alpha-D-xylose = 3-O-{(1-&gt;[3)-alpha-D-Xyl-(1-&gt;3)-beta-D-GlcA-(1-&gt;](n+1)-4)-beta-D-Xyl-(1-&gt;4)-Rib-ol-P-Rib-ol-P-3-beta-D-GalNAc-(1-&gt;3)-beta-D-GlcNAc-(1-&gt;4)-O-6-P-alpha-D-Man}-L-Thr-[protein] + UDP + H(+). Its pathway is protein modification; protein glycosylation. Bifunctional glycosyltransferase with both alpha-1,3-xylosyltransferase and beta-1,3-glucuronyltransferase activities involved in the maturation of alpha-dystroglycan (DAG1) by glycosylation leading to DAG1 binding to laminin G-like domain-containing extracellular proteins with high affinity. Elongates the glucuronyl-beta-1,4-xylose-beta disaccharide primer structure initiated by B4GAT1 by adding repeating units [-3-Xylose-alpha-1,3-GlcA-beta-1-] to produce a heteropolysaccharide. Requires the phosphorylation of core M3 (O-mannosyl trisaccharide) by POMK to elongate the glucuronyl-beta-1,4-xylose-beta disaccharide primer. Plays a key role in skeletal muscle function and regeneration. This is Xylosyl- and glucuronyltransferase LARGE1 from Homo sapiens (Human).